The sequence spans 173 residues: Photosystem I assembly protein Ycf3 (173 aa).

TPR repeat units follow at residues 35–68, 72–105, and 120–153; these read AFAY…EEDP, SFIL…NPKM, and GQRS…APNN.

This sequence belongs to the Ycf3 family.

The protein resides in the cellular thylakoid membrane. In terms of biological role, essential for the assembly of the photosystem I (PSI) complex. May act as a chaperone-like factor to guide the assembly of the PSI subunits. This chain is Photosystem I assembly protein Ycf3, found in Synechococcus elongatus (strain ATCC 33912 / PCC 7942 / FACHB-805) (Anacystis nidulans R2).